The sequence spans 214 residues: Hypoxanthine-guanine phosphoribosyltransferase (214 aa).

Position 2 is an N-acetylalanine (Ala2). Lys69 provides a ligand contact to GMP. Lys103 is modified (N6-acetyllysine). A Glycyl lysine isopeptide (Lys-Gly) (interchain with G-Cter in SUMO1); alternate cross-link involves residue Lys115. Residue Lys115 forms a Glycyl lysine isopeptide (Lys-Gly) (interchain with G-Cter in SUMO2); alternate linkage. GMP-binding positions include 134–142 (EDIIDTGKT), Lys166, 186–188 (KFV), and Asp194. Residue Asp138 is the Proton acceptor of the active site. Thr142 is subject to Phosphothreonine. Asp194 serves as a coordination point for Mg(2+).

It belongs to the purine/pyrimidine phosphoribosyltransferase family. As to quaternary structure, homotetramer. The cofactor is Mg(2+).

Its subcellular location is the cytoplasm. It carries out the reaction IMP + diphosphate = hypoxanthine + 5-phospho-alpha-D-ribose 1-diphosphate. The catalysed reaction is GMP + diphosphate = guanine + 5-phospho-alpha-D-ribose 1-diphosphate. Its pathway is purine metabolism; IMP biosynthesis via salvage pathway; IMP from hypoxanthine: step 1/1. In terms of biological role, converts guanine to guanosine monophosphate, and hypoxanthine to inosine monophosphate. Transfers the 5-phosphoribosyl group from 5-phosphoribosylpyrophosphate onto the purine. Plays a central role in the generation of purine nucleotides through the purine salvage pathway. In Mus spretus (Western Mediterranean mouse), this protein is Hypoxanthine-guanine phosphoribosyltransferase (Hprt1).